The chain runs to 161 residues: Ribonuclease P protein component (161 aa).

The protein belongs to the RnpA family. As to quaternary structure, consists of a catalytic RNA component (M1 or rnpB) and a protein subunit.

The enzyme catalyses Endonucleolytic cleavage of RNA, removing 5'-extranucleotides from tRNA precursor.. Its function is as follows. RNaseP catalyzes the removal of the 5'-leader sequence from pre-tRNA to produce the mature 5'-terminus. It can also cleave other RNA substrates such as 4.5S RNA. The protein component plays an auxiliary but essential role in vivo by binding to the 5'-leader sequence and broadening the substrate specificity of the ribozyme. In Helicobacter pylori (strain Shi470), this protein is Ribonuclease P protein component.